A 400-amino-acid chain; its full sequence is Acetylornithine aminotransferase (400 aa).

Residues 113–114 (GA) and Phe-139 contribute to the pyridoxal 5'-phosphate site. Arg-142 contacts N(2)-acetyl-L-ornithine. 224–227 (DEVQ) provides a ligand contact to pyridoxal 5'-phosphate. Lys-253 bears the N6-(pyridoxal phosphate)lysine mark. Ser-281 is a N(2)-acetyl-L-ornithine binding site. Residue Thr-282 participates in pyridoxal 5'-phosphate binding.

Belongs to the class-III pyridoxal-phosphate-dependent aminotransferase family. ArgD subfamily. As to quaternary structure, homodimer. Pyridoxal 5'-phosphate is required as a cofactor.

The protein localises to the cytoplasm. It carries out the reaction N(2)-acetyl-L-ornithine + 2-oxoglutarate = N-acetyl-L-glutamate 5-semialdehyde + L-glutamate. It participates in amino-acid biosynthesis; L-arginine biosynthesis; N(2)-acetyl-L-ornithine from L-glutamate: step 4/4. The polypeptide is Acetylornithine aminotransferase (Mycobacterium bovis (strain ATCC BAA-935 / AF2122/97)).